A 232-amino-acid polypeptide reads, in one-letter code: Uracil-DNA glycosylase (232 aa).

The active-site Proton acceptor is the aspartate 71.

The protein belongs to the uracil-DNA glycosylase (UDG) superfamily. UNG family.

It localises to the cytoplasm. The catalysed reaction is Hydrolyzes single-stranded DNA or mismatched double-stranded DNA and polynucleotides, releasing free uracil.. Excises uracil residues from the DNA which can arise as a result of misincorporation of dUMP residues by DNA polymerase or due to deamination of cytosine. The sequence is that of Uracil-DNA glycosylase from Azotobacter vinelandii (strain DJ / ATCC BAA-1303).